Here is a 920-residue protein sequence, read N- to C-terminus: Isoleucine--tRNA ligase (920 aa).

Residues 57 to 67 (PYANGDIHLGH) carry the 'HIGH' region motif. Position 560 (E560) interacts with L-isoleucyl-5'-AMP. Positions 601-605 (KMSKS) match the 'KMSKS' region motif. K604 is an ATP binding site. Zn(2+) is bound by residues C890, C893, C910, and C913.

It belongs to the class-I aminoacyl-tRNA synthetase family. IleS type 1 subfamily. As to quaternary structure, monomer. Zn(2+) is required as a cofactor.

Its subcellular location is the cytoplasm. It carries out the reaction tRNA(Ile) + L-isoleucine + ATP = L-isoleucyl-tRNA(Ile) + AMP + diphosphate. Functionally, catalyzes the attachment of isoleucine to tRNA(Ile). As IleRS can inadvertently accommodate and process structurally similar amino acids such as valine, to avoid such errors it has two additional distinct tRNA(Ile)-dependent editing activities. One activity is designated as 'pretransfer' editing and involves the hydrolysis of activated Val-AMP. The other activity is designated 'posttransfer' editing and involves deacylation of mischarged Val-tRNA(Ile). The sequence is that of Isoleucine--tRNA ligase from Caldicellulosiruptor saccharolyticus (strain ATCC 43494 / DSM 8903 / Tp8T 6331).